Here is a 110-residue protein sequence, read N- to C-terminus: Keratin, type II cytoskeletal 8 (110 aa).

Residues 1 to 12 form a head region; the sequence is MSTSGPRAFSSR. Positions 1–110 constitute an IF rod domain; that stretch reads MSTSGPRAFS…LDIEIATYRK (110 aa). Residues Ser2, Ser4, Ser10, and Ser11 each carry the phosphoserine modification. Omega-N-methylarginine is present on Arg12. A coil 1A region spans residues 13–25; that stretch reads FASFIDKVRWSLL. The interval 26–39 is linker 1; it reads QQQKSNMDNMFESY. Residue Lys29 forms a Glycyl lysine isopeptide (Lys-Gly) (interchain with G-Cter in SUMO2) linkage. The segment at 40 to 79 is coil 1B; that stretch reads INNLRDVDEAYMNKVELESRLEGLTDEINFLRQIHEEEIR. Residue Lys53 is modified to N6-acetyllysine. Phosphoserine is present on residues Ser80 and Ser85. The segment at 80–86 is linker 12; that stretch reads SLDMDSI. Residues 87–110 are coil 2; sequence IAEVRHGDDLRRLALDIEIATYRK. The necessary for interaction with PNN stretch occupies residues 88–99; the sequence is AEVRHGDDLRRL. Residue Lys110 forms a Glycyl lysine isopeptide (Lys-Gly) (interchain with G-Cter in SUMO2) linkage.

The protein belongs to the intermediate filament family. Heterotetramer of two type I and two type II keratins. Forms a heterodimer with KRT18. Associates with KRT20. Interacts with PNN. When associated with KRT19, interacts with DMD. Interacts with TCHP. Interacts with APEX1. Interacts with GPER1. Interacts with EPPK1. Interacts with PKP1 and PKP2. Post-translationally, O-glycosylated. O-GlcNAcylation at multiple sites increases solubility, and decreases stability by inducing proteasomal degradation. In terms of processing, O-glycosylated (O-GlcNAcylated), in a cell cycle-dependent manner.

Its subcellular location is the cytoplasm. It is found in the nucleus. The protein localises to the nucleoplasm. The protein resides in the nucleus matrix. Together with KRT19, helps to link the contractile apparatus to dystrophin at the costameres of striated muscle. This is Keratin, type II cytoskeletal 8 from Mesocricetus auratus (Golden hamster).